A 564-amino-acid chain; its full sequence is Septation ring formation regulator EzrA (564 aa).

Over Met1 to Tyr4 the chain is Extracellular. The helical transmembrane segment at Ile5–Leu23 threads the bilayer. At Arg24 to Gln564 the chain is on the cytoplasmic side. Coiled coils occupy residues Ser99–Asn138, Asp190–Glu223, Leu271–His300, Val350–Leu435, and Val471–Glu550.

This sequence belongs to the EzrA family.

The protein resides in the cell membrane. In terms of biological role, negative regulator of FtsZ ring formation; modulates the frequency and position of FtsZ ring formation. Inhibits FtsZ ring formation at polar sites. Interacts either with FtsZ or with one of its binding partners to promote depolymerization. This Staphylococcus aureus (strain JH1) protein is Septation ring formation regulator EzrA.